A 703-amino-acid polypeptide reads, in one-letter code: DNA ligase (703 aa).

Residues 44–48, 93–94, and glutamate 127 each bind NAD(+); these read DAEYD and SL. The active-site N6-AMP-lysine intermediate is the lysine 129. Residues arginine 150, glutamate 186, lysine 302, and lysine 326 each contribute to the NAD(+) site. Cysteine 420, cysteine 422, cysteine 444, and cysteine 450 together coordinate Zn(2+). The BRCT domain maps to 625–703; it reads VADSPVAGKT…EDMWFQRIGA (79 aa).

This sequence belongs to the NAD-dependent DNA ligase family. LigA subfamily. Mg(2+) serves as cofactor. It depends on Mn(2+) as a cofactor.

The enzyme catalyses NAD(+) + (deoxyribonucleotide)n-3'-hydroxyl + 5'-phospho-(deoxyribonucleotide)m = (deoxyribonucleotide)n+m + AMP + beta-nicotinamide D-nucleotide.. In terms of biological role, DNA ligase that catalyzes the formation of phosphodiester linkages between 5'-phosphoryl and 3'-hydroxyl groups in double-stranded DNA using NAD as a coenzyme and as the energy source for the reaction. It is essential for DNA replication and repair of damaged DNA. This Chelativorans sp. (strain BNC1) protein is DNA ligase.